The chain runs to 718 residues: Methionine--tRNA ligase (718 aa).

The short motif at 27–37 is the 'HIGH' region element; the sequence is PYANGQIHIGH. Zn(2+) is bound by residues Cys158, Cys161, Cys171, and Cys174. The 'KMSKS' region signature appears at 348-352; it reads KMSKS. Lys351 serves as a coordination point for ATP. A tRNA-binding domain is found at 612–718; it reads DFAKIDLRIA…SGAKPGMRVK (107 aa).

It belongs to the class-I aminoacyl-tRNA synthetase family. MetG type 1 subfamily. Homodimer. Zn(2+) is required as a cofactor.

It is found in the cytoplasm. It catalyses the reaction tRNA(Met) + L-methionine + ATP = L-methionyl-tRNA(Met) + AMP + diphosphate. Is required not only for elongation of protein synthesis but also for the initiation of all mRNA translation through initiator tRNA(fMet) aminoacylation. The polypeptide is Methionine--tRNA ligase (Burkholderia thailandensis (strain ATCC 700388 / DSM 13276 / CCUG 48851 / CIP 106301 / E264)).